Here is a 359-residue protein sequence, read N- to C-terminus: Protein Wnt-5b (359 aa).

Residues 1–17 (MPSLLLVVVAALLSSWA) form the signal peptide. A disulfide bridge connects residues cysteine 83 and cysteine 94. 2 N-linked (GlcNAc...) asparagine glycosylation sites follow: asparagine 93 and asparagine 99. 10 cysteine pairs are disulfide-bonded: cysteine 133–cysteine 141, cysteine 143–cysteine 161, cysteine 217–cysteine 231, cysteine 219–cysteine 226, cysteine 288–cysteine 319, cysteine 304–cysteine 314, cysteine 318–cysteine 358, cysteine 334–cysteine 349, cysteine 336–cysteine 346, and cysteine 341–cysteine 342. Residue serine 223 is the site of O-palmitoleoyl serine; by PORCN attachment. 2 N-linked (GlcNAc...) asparagine glycosylation sites follow: asparagine 291 and asparagine 305.

Belongs to the Wnt family. In terms of assembly, interacts with PORCN. In terms of processing, palmitoleoylation is required for efficient binding to frizzled receptors. Depalmitoleoylation leads to Wnt signaling pathway inhibition.

Its subcellular location is the secreted. The protein resides in the extracellular space. The protein localises to the extracellular matrix. In terms of biological role, ligand for members of the frizzled family of seven transmembrane receptors. Probable developmental protein. May be a signaling molecule which affects the development of discrete regions of tissues. Is likely to signal over only few cell diameters. The chain is Protein Wnt-5b (Wnt5b) from Mus musculus (Mouse).